A 122-amino-acid chain; its full sequence is Ribosome-binding factor A (122 aa).

Belongs to the RbfA family. Monomer. Binds 30S ribosomal subunits, but not 50S ribosomal subunits or 70S ribosomes.

The protein localises to the cytoplasm. Functionally, one of several proteins that assist in the late maturation steps of the functional core of the 30S ribosomal subunit. Associates with free 30S ribosomal subunits (but not with 30S subunits that are part of 70S ribosomes or polysomes). Required for efficient processing of 16S rRNA. May interact with the 5'-terminal helix region of 16S rRNA. The protein is Ribosome-binding factor A of Pelagibacter ubique (strain HTCC1062).